The following is a 326-amino-acid chain: Putative [LysW]-lysine/[LysW]-ornithine hydrolase (326 aa).

Zn(2+) is bound at residue histidine 66. The active site involves aspartate 68. Aspartate 90 is a binding site for Zn(2+). Glutamate 117 serves as the catalytic Proton acceptor. Glutamate 118, glutamate 139, and histidine 297 together coordinate Zn(2+).

It belongs to the peptidase M20A family. LysK subfamily. Requires Zn(2+) as cofactor. Co(2+) is required as a cofactor.

It is found in the cytoplasm. It catalyses the reaction [amino-group carrier protein]-C-terminal-gamma-(L-lysyl)-L-glutamate + H2O = [amino-group carrier protein]-C-terminal-L-glutamate + L-lysine. It carries out the reaction [amino-group carrier protein]-C-terminal-gamma-(L-ornithyl)-L-glutamate + H2O = [amino-group carrier protein]-C-terminal-L-glutamate + L-ornithine. It functions in the pathway amino-acid biosynthesis; L-lysine biosynthesis via AAA pathway; L-lysine from L-alpha-aminoadipate (Thermus route): step 5/5. The protein operates within amino-acid biosynthesis; L-arginine biosynthesis. Functionally, catalyzes the release of L-lysine from [LysW]-gamma-L-lysine and the release of L-ornithine from [LysW]-L-ornithine. The sequence is that of Putative [LysW]-lysine/[LysW]-ornithine hydrolase from Pyrococcus furiosus (strain ATCC 43587 / DSM 3638 / JCM 8422 / Vc1).